We begin with the raw amino-acid sequence, 414 residues long: MALKKFLEDIEHHFEPGGKHEKWFALYEAVATVFYTPGLVTKKSSHVRDSVDLKRIMIMVWFAVFPAMFWGMYNAGGQAIAALNHMYAGDQLATVIAGNWHYWLTEMLGGSISADAGVGSKMLLGATYFLPIYATVFLVGGFWEVLFCMVRKHEVNEGFFVTSILFALIVPPTLPLWQAALGITFGVVVAKEIFGGTGRNFLNPALAGRAFLFFAYPAQISGDVVWTAADGFSGATALSQWAHGGSGALINNITGAPITWMDAFIGNIPGSIGEVSTLALMIGAAMIVYMRIASWRIIAGVMIGMIAVSTLFNVVGSDTNPMFNMPWHWHLVLGGFAFGMFFMATDPVSASFTNKGKWWYGILIGAMCVMIRVVNPAYPEGMMLAILFANLFAPLFDHVVIEKNIKRRLARYGK.

The next 4 membrane-spanning stretches (helical) occupy residues 23–40 (WFALYEAVATVFYTPGLV), 56–76 (IMIMVWFAVFPAMFWGMYNAG), 129–149 (FLPIYATVFLVGGFWEVLFCM), and 164–184 (ILFALIVPPTLPLWQAALGIT). Thr-236 is subject to FMN phosphoryl threonine. 5 helical membrane passes run 268 to 288 (IPGSIGEVSTLALMIGAAMIV), 297 to 317 (IIAGVMIGMIAVSTLFNVVGS), 325 to 345 (MPWHWHLVLGGFAFGMFFMAT), 358 to 378 (WWYGILIGAMCVMIRVVNPAY), and 381 to 401 (GMMLAILFANLFAPLFDHVVI).

The protein belongs to the NqrB/RnfD family. Composed of six subunits; NqrA, NqrB, NqrC, NqrD, NqrE and NqrF. Requires FMN as cofactor.

The protein localises to the cell inner membrane. It catalyses the reaction a ubiquinone + n Na(+)(in) + NADH + H(+) = a ubiquinol + n Na(+)(out) + NAD(+). Its function is as follows. NQR complex catalyzes the reduction of ubiquinone-1 to ubiquinol by two successive reactions, coupled with the transport of Na(+) ions from the cytoplasm to the periplasm. NqrA to NqrE are probably involved in the second step, the conversion of ubisemiquinone to ubiquinol. This chain is Na(+)-translocating NADH-quinone reductase subunit B, found in Vibrio parahaemolyticus serotype O3:K6 (strain RIMD 2210633).